The primary structure comprises 251 residues: CDP-diacylglycerol pyrophosphatase (251 aa).

The helical transmembrane segment at 4–24 (AGLLFLVMIVIAVVAAGIGYW) threads the bilayer.

The protein belongs to the Cdh family.

It localises to the cell inner membrane. It carries out the reaction a CDP-1,2-diacyl-sn-glycerol + H2O = a 1,2-diacyl-sn-glycero-3-phosphate + CMP + 2 H(+). The protein operates within phospholipid metabolism; CDP-diacylglycerol degradation; phosphatidate from CDP-diacylglycerol: step 1/1. The chain is CDP-diacylglycerol pyrophosphatase from Escherichia coli O7:K1 (strain IAI39 / ExPEC).